We begin with the raw amino-acid sequence, 859 residues long: DNA-directed RNA polymerase subunit Rpo1C (859 aa).

It belongs to the RNA polymerase beta' chain family. In terms of assembly, part of the RNA polymerase complex. This protein undergoes a protein self splicing that involves a post-translational excision of the intervening region (intein) followed by peptide ligation.

The protein resides in the cytoplasm. The enzyme catalyses RNA(n) + a ribonucleoside 5'-triphosphate = RNA(n+1) + diphosphate. Its function is as follows. DNA-dependent RNA polymerase (RNAP) catalyzes the transcription of DNA into RNA using the four ribonucleoside triphosphates as substrates. Forms part of the jaw domain. This Methanocaldococcus jannaschii (strain ATCC 43067 / DSM 2661 / JAL-1 / JCM 10045 / NBRC 100440) (Methanococcus jannaschii) protein is DNA-directed RNA polymerase subunit Rpo1C.